Here is a 385-residue protein sequence, read N- to C-terminus: Transcription factor TGAL3 (385 aa).

Residues Leu-62–Arg-113 are disordered. Over residues Ser-87–Met-96 the composition is skewed to basic and acidic residues. Residues Asp-93–Arg-137 enclose the bZIP domain. Residues Lys-95–Lys-115 form a basic motif region. A leucine-zipper region spans residues Leu-121–Leu-135. The DOG1 domain maps to Thr-162–Arg-382.

Belongs to the bZIP family. As to quaternary structure, interacts with NPR1/NH1, NPR2/NH2 and NPR3/NH3.

Its subcellular location is the nucleus. In terms of biological role, transcriptional regulator involved in defense response. The polypeptide is Transcription factor TGAL3 (Oryza sativa subsp. japonica (Rice)).